Consider the following 635-residue polypeptide: 1-deoxy-D-xylulose-5-phosphate synthase (635 aa).

Thiamine diphosphate is bound by residues His72 and Gly113 to Ala115. Asp144 serves as a coordination point for Mg(2+). Thiamine diphosphate contacts are provided by residues Gly145–Ala146, Asn174, Tyr287, and Glu370. Mg(2+) is bound at residue Asn174.

The protein belongs to the transketolase family. DXPS subfamily. Homodimer. Mg(2+) serves as cofactor. Thiamine diphosphate is required as a cofactor.

It carries out the reaction D-glyceraldehyde 3-phosphate + pyruvate + H(+) = 1-deoxy-D-xylulose 5-phosphate + CO2. It functions in the pathway metabolic intermediate biosynthesis; 1-deoxy-D-xylulose 5-phosphate biosynthesis; 1-deoxy-D-xylulose 5-phosphate from D-glyceraldehyde 3-phosphate and pyruvate: step 1/1. In terms of biological role, catalyzes the acyloin condensation reaction between C atoms 2 and 3 of pyruvate and glyceraldehyde 3-phosphate to yield 1-deoxy-D-xylulose-5-phosphate (DXP). The polypeptide is 1-deoxy-D-xylulose-5-phosphate synthase (Trichodesmium erythraeum (strain IMS101)).